Reading from the N-terminus, the 411-residue chain is MSDSVILALGIAAFTVIVLVLVAIILFAKSKLVDSGDITIDINDDPEKAITLPAGGKLLGALASKGIFVSSACGGGGSCGQCIVKVKNGGGEILPTELSHINKREAKEGYRLACQVNVKGNMEVELPEEIFGVKKWECTVISNDNKATFIKELKLAIPEGEEVPFRAGGYIQIEAEPHVVNYKDFDIPEEYHEDWDKYDLWRYVSKVDEHIIRAYSMASYPEEKGIIMLNVRIATPPPRQPDAPPGQMSSYIWSLKAGDKVTISGPFGEFFAKETDAEMVFIGGGAGMAPMRSHIFDQLKRLHSKRKMSFWYGARSKREIFYQEDFDQLQAENDNFVWHVALSDALPEDNWTGYTGFIHNVLYENYLKNHEAPEDCEYYMCGPPVMNAAVIKMLKDLGVEDENILLDDFGG.

Residues 5–25 (VILALGIAAFTVIVLVLVAII) traverse the membrane as a helical segment. The 2Fe-2S ferredoxin-type domain occupies 36 to 130 (GDITIDINDD…NMEVELPEEI (95 aa)). Cys-73, Cys-79, Cys-82, and Cys-114 together coordinate [2Fe-2S] cluster. The 141-residue stretch at 133-273 (VKKWECTVIS…SGPFGEFFAK (141 aa)) folds into the FAD-binding FR-type domain.

The protein belongs to the NqrF family. In terms of assembly, composed of six subunits; NqrA, NqrB, NqrC, NqrD, NqrE and NqrF. The cofactor is [2Fe-2S] cluster. It depends on FAD as a cofactor.

It localises to the cell inner membrane. The catalysed reaction is a ubiquinone + n Na(+)(in) + NADH + H(+) = a ubiquinol + n Na(+)(out) + NAD(+). Functionally, NQR complex catalyzes the reduction of ubiquinone-1 to ubiquinol by two successive reactions, coupled with the transport of Na(+) ions from the cytoplasm to the periplasm. The first step is catalyzed by NqrF, which accepts electrons from NADH and reduces ubiquinone-1 to ubisemiquinone by a one-electron transfer pathway. The polypeptide is Na(+)-translocating NADH-quinone reductase subunit F (Haemophilus influenzae (strain PittGG)).